We begin with the raw amino-acid sequence, 1133 residues long: Exportin-4 (1133 aa).

It belongs to the exportin family. In terms of assembly, interacts with Ran and cargo proteins in a GTP-dependent manner.

The protein resides in the cytoplasm. It is found in the nucleus. Its function is as follows. Mediates the nuclear export of proteins (cargos). In the nucleus binds cooperatively to its cargo and to the GTPase Ran in its active GTP-bound form. Docking of this trimeric complex to the nuclear pore complex (NPC) is mediated through binding to nucleoporins. Upon transit of a nuclear export complex into the cytoplasm, disassembling of the complex and hydrolysis of Ran-GTP to Ran-GDP cause release of the cargo from the export receptor. Xpo4 then return to the nuclear compartment and mediate another round of transport. The directionality of nuclear export is thought to be conferred by an asymmetric distribution of the GTP- and GDP-bound forms of Ran between the cytoplasm and nucleus. This chain is Exportin-4 (xpo4), found in Dictyostelium discoideum (Social amoeba).